Reading from the N-terminus, the 361-residue chain is Protein RecA (361 aa).

Position 77–84 (glycine 77–threonine 84) interacts with ATP.

This sequence belongs to the RecA family.

It localises to the cytoplasm. Its function is as follows. Can catalyze the hydrolysis of ATP in the presence of single-stranded DNA, the ATP-dependent uptake of single-stranded DNA by duplex DNA, and the ATP-dependent hybridization of homologous single-stranded DNAs. It interacts with LexA causing its activation and leading to its autocatalytic cleavage. The sequence is that of Protein RecA from Rhizobium rhizogenes (strain K84 / ATCC BAA-868) (Agrobacterium radiobacter).